A 559-amino-acid polypeptide reads, in one-letter code: MATALSEEELDNEDYYSLLNVRREASCEELKAAYRRLCMLYHPDKHRDPELKSQAERLFNLVHQAYEVLSDPQTRAIYDIYGKRGLEMEGWEVVERRRTPAEIREEFERLQREREERRLQQRTNPKGTISVGIDATDLFDRYEEEYEDVSGSGFPQIEINKMHISQSIEAPLTASDTAILSGSLSTQNGNGGGSINFALRRVTSAKGWGELEFGAGDLQGPLFGLKLFRNLTPRCFVTTHCALQFSSRGIRPGLTTVLARNLDKNTVGYLQWRWGVQSAMNTSIVRDTKTSHFTVALQLGIPHSFALISYQHKFQDDDQTRVKGSLKAGFFGTVVEYGAERKISRHSVLGAAVSIGVPQGVSLKIKLNRASQTYFFPIHLTDQLLPSAVFYATAGPLVLYFALHRLVIRPYLRAQKEKELEKQRESTATDILQKKQEAEAAVRLMQESVRRIIEAEESRMGLIIVNAWYGKFVNDKSKKSEKVKVIDVTVPLQCLVKDSKLILTEASKAGLPGFYDPCVGEEKNLKVLYQFRGVLHQVMALDSEALRIPKQSHRIDTDG.

N-acetylalanine is present on Ala2. Residues 14–82 (DYYSLLNVRR…QTRAIYDIYG (69 aa)) enclose the J domain. At Ser204 the chain carries Phosphoserine. The stretch at 418 to 457 (KELEKQRESTATDILQKKQEAEAAVRLMQESVRRIIEAEE) forms a coiled coil.

The protein belongs to the DNAJC11 family. Associates with the mitochondrial contact site and cristae organizing system (MICOS) complex, composed of at least MICOS10/MIC10, CHCHD3/MIC19, CHCHD6/MIC25, APOOL/MIC27, IMMT/MIC60, APOO/MIC23/MIC26 and QIL1/MIC13. This complex was also known under the names MINOS or MitOS complex. The MICOS complex associates with mitochondrial outer membrane proteins SAMM50, MTX1 and MTX2 (together described as components of the mitochondrial outer membrane sorting assembly machinery (SAM) complex) and DNAJC11, mitochondrial inner membrane protein TMEM11 and with HSPA9. The MICOS and SAM complexes together with DNAJC11 are part of a large protein complex spanning both membranes termed the mitochondrial intermembrane space bridging (MIB) complex.

Its subcellular location is the mitochondrion. It localises to the mitochondrion outer membrane. Required for mitochondrial inner membrane organization. Seems to function through its association with the MICOS complex and the mitochondrial outer membrane sorting assembly machinery (SAM) complex. This is DnaJ homolog subfamily C member 11 (DNAJC11) from Bos taurus (Bovine).